A 328-amino-acid polypeptide reads, in one-letter code: Eukaryotic translation initiation factor 3 subunit I (328 aa).

WD repeat units follow at residues 8 to 49 (GHER…GTYR), 50 to 89 (GHNG…ELFT), 146 to 185 (DGKK…LLKQ), 191 to 230 (GHKK…LLKT), and 288 to 327 (GHFG…FNIK).

The protein belongs to the eIF-3 subunit I family. In terms of assembly, component of the eukaryotic translation initiation factor 3 (eIF-3) complex.

It localises to the cytoplasm. Functionally, component of the eukaryotic translation initiation factor 3 (eIF-3) complex, which is involved in protein synthesis of a specialized repertoire of mRNAs and, together with other initiation factors, stimulates binding of mRNA and methionyl-tRNAi to the 40S ribosome. The eIF-3 complex specifically targets and initiates translation of a subset of mRNAs involved in cell proliferation. This is Eukaryotic translation initiation factor 3 subunit I (TIF3I1) from Arabidopsis thaliana (Mouse-ear cress).